The chain runs to 124 residues: Small ribosomal subunit protein uS12 (124 aa).

Aspartate 89 carries the post-translational modification 3-methylthioaspartic acid. At lysine 108 the chain carries N6-acetyllysine.

It belongs to the universal ribosomal protein uS12 family. In terms of assembly, part of the 30S ribosomal subunit. Contacts proteins S8 and S17. May interact with IF1 in the 30S initiation complex.

With S4 and S5 plays an important role in translational accuracy. Functionally, interacts with and stabilizes bases of the 16S rRNA that are involved in tRNA selection in the A site and with the mRNA backbone. Located at the interface of the 30S and 50S subunits, it traverses the body of the 30S subunit contacting proteins on the other side and probably holding the rRNA structure together. The combined cluster of proteins S8, S12 and S17 appears to hold together the shoulder and platform of the 30S subunit. The protein is Small ribosomal subunit protein uS12 of Escherichia coli (strain K12 / MC4100 / BW2952).